Here is a 124-residue protein sequence, read N- to C-terminus: Ribonuclease pancreatic (124 aa).

The segment covering 1 to 15 has biased composition (basic and acidic residues); it reads KESPAKKFQRQHMDP. The interval 1 to 24 is disordered; it reads KESPAKKFQRQHMDPDSSSSNSSN. Residues Lys-7 and Arg-10 each contribute to the substrate site. The active-site Proton acceptor is His-12. Asn-21 and Asn-34 each carry an N-linked (GlcNAc...) asparagine glycan. Intrachain disulfides connect Cys-26–Cys-84, Cys-40–Cys-95, Cys-58–Cys-110, and Cys-65–Cys-72. Substrate-binding positions include 41–45 and Lys-66; that span reads KPVNT. Residue Asn-76 is glycosylated (N-linked (GlcNAc...) asparagine). Arg-85 lines the substrate pocket. His-119 functions as the Proton donor in the catalytic mechanism.

It belongs to the pancreatic ribonuclease family. As to quaternary structure, monomer. Interacts with and forms tight 1:1 complexes with RNH1. Dimerization of two such complexes may occur. Interaction with RNH1 inhibits this protein. Pancreas.

The protein localises to the secreted. The catalysed reaction is an [RNA] containing cytidine + H2O = an [RNA]-3'-cytidine-3'-phosphate + a 5'-hydroxy-ribonucleotide-3'-[RNA].. It catalyses the reaction an [RNA] containing uridine + H2O = an [RNA]-3'-uridine-3'-phosphate + a 5'-hydroxy-ribonucleotide-3'-[RNA].. Functionally, endonuclease that catalyzes the cleavage of RNA on the 3' side of pyrimidine nucleotides. Acts on single-stranded and double-stranded RNA. The protein is Ribonuclease pancreatic (RNASE1) of Sus scrofa (Pig).